The sequence spans 261 residues: Thiamine thiazole synthase (261 aa).

Residues S40, 59-60, G67, V133, and 159-161 contribute to the NAD(+) site; these read ER and HID. 2 residues coordinate Fe cation: D161 and H176. Residues S179 and M226 each coordinate NAD(+). R236 serves as a coordination point for glycine.

The protein belongs to the THI4 family. As to quaternary structure, homooctamer; tetramer of dimers. Requires Fe(2+) as cofactor.

It carries out the reaction hydrogen sulfide + glycine + NAD(+) = ADP-5-ethyl-4-methylthiazole-2-carboxylate + nicotinamide + 3 H2O + H(+). It participates in cofactor biosynthesis; thiamine diphosphate biosynthesis. In terms of biological role, involved in the biosynthesis of the thiazole moiety of thiamine. Catalyzes the conversion of NAD and glycine to adenosine diphosphate 5-(2-hydroxyethyl)-4-methylthiazole-2-carboxylate (ADT), an adenylated thiazole intermediate, using free sulfide as a source of sulfur. The polypeptide is Thiamine thiazole synthase (Methanococcus maripaludis (strain C6 / ATCC BAA-1332)).